The chain runs to 281 residues: Elongation factor Ts (281 aa).

The involved in Mg(2+) ion dislocation from EF-Tu stretch occupies residues 79 to 82 (TDFV).

It belongs to the EF-Ts family.

The protein localises to the cytoplasm. Functionally, associates with the EF-Tu.GDP complex and induces the exchange of GDP to GTP. It remains bound to the aminoacyl-tRNA.EF-Tu.GTP complex up to the GTP hydrolysis stage on the ribosome. The polypeptide is Elongation factor Ts (Wolbachia pipientis subsp. Culex pipiens (strain wPip)).